Consider the following 1009-residue polypeptide: MLFSGGQYSPVGRPEEVLLIYKIFLVIICFHVILVTSLKENGNSSLLSPSAESSLVSLIPYSNGTPDAASEVLSTLNKTEKSKITIVKTFNASGVKSQRNICNLSSLCNDSVFFRGEIVFQHDEDHNVTQNQDTANGTFAGVLSLSELKRSELNKTLQTLSETYFIVCATAEAQSTVNCTFTVKLNETMNVCAMMVTFQTVQIRPMEQCCCSPRTPCPSSPEELEKLQCELQDPIVCLADQPHGPPLSSSSKPVVPQATIISHVASDFSLAEPLDHALMTPSTPSLTQESNLPSPQPTIPLASSPATDLPVQSVVVSSLPQTDLSHTLSPVQSSIPSPTTPAPSVPTELVTISTPPGETVVNTSTVSDLEAQVSQMEKALSLGSLEPNLAGEMVNRVSKLLHSPPALLAPLAQRLLKVVDAIGLQLNFSSTTISLTSPSLALAVIRVNASNFNTTTFAAQDPTNLQVSLETPPPENSIGAITLPSSLMNNLPANDVELASRIQFNFFETPALFQDPSLENLTLISYVISSSVTNMTIKNLTRNVTVALKHINPSPDDLTVKCVFWDLGRNGGKGGWSSDGCSVKDKRMNETICTCSHLTSFGILLDLSRTSLPPSQMMALTFITYIGCGLSSIFLSVTLVTYIAFEKIRRDYPSKILIQLCAALLLLNLIFLLDSWIALYNTRGFCIAVAVFLHYFLLVSFTWMGLEAFHMYLALVKVFNTYIRKYILKFCIVGWGIPAVVVSIVLTISPDNYGIGSYGKFPNGTPDDFCWINSNVVFYITVVGYFCVIFLLNVSMFIVVLVQLCRIKKKKQLGAQRKTSIQDLRSIAGLTFLLGITWGFAFFAWGPVNVTFMYLFAIFNTLQGFFIFIFYCAAKENVRKQWRRYLCCGKLRLAENSDWSKTATNGLKKQTVNQGVSSSSNSLQSSCNSTNSTTLLVNSDCSVHASGNGNASTERNGVSFSVQNGDVCLHDLTGKQHMFSDKEDSCNGKSRIALRRTSKRGSLHFIEQM.

The first 37 residues, 1 to 37 (MLFSGGQYSPVGRPEEVLLIYKIFLVIICFHVILVTS), serve as a signal peptide directing secretion. At 38-617 (LKENGNSSLL…SRTSLPPSQM (580 aa)) the chain is on the extracellular side. Residues Asn-43, Asn-77, Asn-91, Asn-103, Asn-109, Asn-127, Asn-136, Asn-154, Asn-178, and Asn-186 are each glycosylated (N-linked (GlcNAc...) asparagine). Disordered stretches follow at residues 279 to 305 (MTPS…ASSP) and 325 to 346 (SHTL…PSVP). The span at 280–293 (TPSTPSLTQESNLP) shows a compositional bias: polar residues. N-linked (GlcNAc...) asparagine glycans are attached at residues Asn-362, Asn-427, Asn-448, Asn-453, Asn-520, Asn-534, Asn-539, Asn-543, and Asn-589. The region spanning 453–611 (NTTTFAAQDP…GILLDLSRTS (159 aa)) is the GAIN-B domain. Cystine bridges form between Cys-562/Cys-593 and Cys-581/Cys-595. Residues 562-611 (CVFWDLGRNGGKGGWSSDGCSVKDKRMNETICTCSHLTSFGILLDLSRTS) are GPS. The interval 600–611 (SFGILLDLSRTS) is stachel. The chain crosses the membrane as a helical span at residues 618–640 (MALTFITYIGCGLSSIFLSVTLV). Residues 641–655 (TYIAFEKIRRDYPSK) lie on the Cytoplasmic side of the membrane. The helical transmembrane segment at 656-679 (ILIQLCAALLLLNLIFLLDSWIAL) threads the bilayer. Residues 680–683 (YNTR) lie on the Extracellular side of the membrane. Residues 684-709 (GFCIAVAVFLHYFLLVSFTWMGLEAF) traverse the membrane as a helical segment. Cys-686 and Cys-770 form a disulfide bridge. Residues 710–728 (HMYLALVKVFNTYIRKYIL) lie on the Cytoplasmic side of the membrane. The chain crosses the membrane as a helical span at residues 729 to 751 (KFCIVGWGIPAVVVSIVLTISPD). The Extracellular segment spans residues 752–776 (NYGIGSYGKFPNGTPDDFCWINSNV). The chain crosses the membrane as a helical span at residues 777 to 802 (VFYITVVGYFCVIFLLNVSMFIVVLV). Over 803–823 (QLCRIKKKKQLGAQRKTSIQD) the chain is Cytoplasmic. Residues 824 to 845 (LRSIAGLTFLLGITWGFAFFAW) form a helical membrane-spanning segment. At 846 to 850 (GPVNV) the chain is on the extracellular side. Asn-849 carries N-linked (GlcNAc...) asparagine glycosylation. The helical transmembrane segment at 851–872 (TFMYLFAIFNTLQGFFIFIFYC) threads the bilayer. Residue Asn-860 coordinates 3beta-hydroxyandrost-5-en-17-one. The Cytoplasmic portion of the chain corresponds to 873-1009 (AAKENVRKQW…RGSLHFIEQM (137 aa)). At Ser-1002 the chain carries Phosphoserine.

This sequence belongs to the G-protein coupled receptor 2 family. Adhesion G-protein coupled receptor (ADGR) subfamily. In terms of assembly, heterodimer of 2 chains generated by proteolytic processing; the large extracellular N-terminal fragment and the membrane-bound C-terminal fragment predominantly remain associated and non-covalently linked. Interacts with CFTR. Proteolytically cleaved into 2 subunits, an extracellular subunit and a seven-transmembrane subunit. Post-translationally, highly glycosylated. As to expression, epididymis-specific expression (at protein level). Associated with apical membranes of efferent ductule and proximal epididymal duct epithelia. Mainly expressed in the nonciliated principal cells of the proximal excurrent ducts.

The protein resides in the apical cell membrane. With respect to regulation, forms a heterodimer of 2 chains generated by proteolytic processing that remain associated through non-covalent interactions mediated by the GAIN-B domain. In the inactivated receptor, the Stachel sequence (also named stalk) is embedded in the GAIN-B domain, where it adopts a beta-strand conformation. On activation, the Stachel moves into the 7 transmembrane region and adopts a twisted hook-shaped configuration that forms contacts within the receptor, leading to coupling of a G-alpha protein, which activates signaling. The cleaved GAIN-B and N-terminal domains can then dissociate from the rest of the receptor. Deoxycorticosterone (DOC) acts as an antagonist of ADGRG2. Its function is as follows. Adhesion G-protein coupled receptor (aGPCR) for steroid hormones, such as dehydroepiandrosterone (DHEA; also named 3beta-hydroxyandrost-5-en-17-one) and androstenedione. Involved in a signal transduction pathway controlling epididymal function and male fertility. Ligand binding causes a conformation change that triggers signaling via guanine nucleotide-binding proteins (G proteins) and modulates the activity of downstream effectors, such as adenylate cyclase. ADGRG2 is coupled to G(s) G proteins and mediates activation of adenylate cyclase activity. Also able to couple with G(q) G proteins in vitro. May regulate fluid exchange within epididymis. The protein is Adhesion G-protein coupled receptor G2 of Mus musculus (Mouse).